Here is a 126-residue protein sequence, read N- to C-terminus: Holo-[acyl-carrier-protein] synthase (126 aa).

Positions 9 and 58 each coordinate Mg(2+).

It belongs to the P-Pant transferase superfamily. AcpS family. It depends on Mg(2+) as a cofactor.

It localises to the cytoplasm. The catalysed reaction is apo-[ACP] + CoA = holo-[ACP] + adenosine 3',5'-bisphosphate + H(+). Functionally, transfers the 4'-phosphopantetheine moiety from coenzyme A to a Ser of acyl-carrier-protein. This Klebsiella pneumoniae subsp. pneumoniae (strain ATCC 700721 / MGH 78578) protein is Holo-[acyl-carrier-protein] synthase.